The primary structure comprises 154 residues: Transcriptional repressor NrdR (154 aa).

The segment at 3–34 (CPFCNHGELKVIDSRNAPESNAIKRRRECLRC) is a zinc-finger region. The 91-residue stretch at 48–138 (VQVLKRDGRY…VYRRFKDVGE (91 aa)) folds into the ATP-cone domain.

The protein belongs to the NrdR family. Zn(2+) is required as a cofactor.

Negatively regulates transcription of bacterial ribonucleotide reductase nrd genes and operons by binding to NrdR-boxes. The chain is Transcriptional repressor NrdR from Chlamydia trachomatis serovar L2 (strain ATCC VR-902B / DSM 19102 / 434/Bu).